The following is a 558-amino-acid chain: CTP synthase (558 aa).

The interval 1 to 271 (MAARQQTKHL…DAYVVRRLGL (271 aa)) is amidoligase domain. Ser-18 serves as a coordination point for CTP. Position 18 (Ser-18) interacts with UTP. ATP-binding positions include 19-24 (SLGKGL) and Asp-76. Mg(2+) contacts are provided by Asp-76 and Glu-145. Residues 152–154 (DIE), 192–197 (KTKPTQ), and Lys-228 contribute to the CTP site. UTP is bound by residues 192 to 197 (KTKPTQ) and Lys-228. One can recognise a Glutamine amidotransferase type-1 domain in the interval 296 to 545 (TIALVGKYVD…IRAALLHRCP (250 aa)). Residue Gly-359 participates in L-glutamine binding. The Nucleophile; for glutamine hydrolysis role is filled by Cys-386. Residues 387-390 (LGLQ), Glu-410, and Arg-471 contribute to the L-glutamine site. Active-site residues include His-518 and Glu-520.

The protein belongs to the CTP synthase family. In terms of assembly, homotetramer.

The enzyme catalyses UTP + L-glutamine + ATP + H2O = CTP + L-glutamate + ADP + phosphate + 2 H(+). It carries out the reaction L-glutamine + H2O = L-glutamate + NH4(+). The catalysed reaction is UTP + NH4(+) + ATP = CTP + ADP + phosphate + 2 H(+). Its pathway is pyrimidine metabolism; CTP biosynthesis via de novo pathway; CTP from UDP: step 2/2. With respect to regulation, allosterically activated by GTP, when glutamine is the substrate; GTP has no effect on the reaction when ammonia is the substrate. The allosteric effector GTP functions by stabilizing the protein conformation that binds the tetrahedral intermediate(s) formed during glutamine hydrolysis. Inhibited by the product CTP, via allosteric rather than competitive inhibition. In terms of biological role, catalyzes the ATP-dependent amination of UTP to CTP with either L-glutamine or ammonia as the source of nitrogen. Regulates intracellular CTP levels through interactions with the four ribonucleotide triphosphates. This is CTP synthase from Acidothermus cellulolyticus (strain ATCC 43068 / DSM 8971 / 11B).